A 453-amino-acid chain; its full sequence is Fibrinogen gamma chain (453 aa).

The signal sequence occupies residues 1–26 (MSWSLHPRNLILYFYALLFLSSTCVA). Serine 68 is modified (phosphoserine; by FAM20C). N-linked (GlcNAc...) (complex) asparagine glycosylation is present at asparagine 78. In terms of domain architecture, Fibrinogen C-terminal spans 170 to 416 (QIHDITGKDC…KTTMKIIPFN (247 aa)). A disulfide bridge links cysteine 179 with cysteine 208. An N-linked (GlcNAc...) asparagine; in variant Asahi glycan is attached at asparagine 334. The Ca(2+) site is built by aspartate 344, aspartate 346, phenylalanine 348, and glycine 350. Cysteine 352 and cysteine 365 are disulfide-bonded. Residues 400–422 (TRWYSMKKTTMKIIPFNRLTIGE) form a gamma-chain polymerization, binding amino end of another fibrin alpha chain region. Residues 423–437 (GQQHHLGGAKQVRPE) form a platelet aggregation and Staphylococcus clumping region. Glutamine 424 is covalently cross-linked (Isoglutamyl lysine isopeptide (Gln-Lys) (interchain with K-432)). A disordered region spans residues 424–453 (QQHHLGGAKQVRPEHPAETEYDSLYPEDDL). An Isoglutamyl lysine isopeptide (Lys-Gln) (interchain with Q-424) cross-link involves residue lysine 432. Over residues 442 to 453 (TEYDSLYPEDDL) the composition is skewed to acidic residues. Residues tyrosine 444 and tyrosine 448 each carry the sulfotyrosine modification.

As to quaternary structure, heterohexamer; disulfide linked. Contains 2 sets of 3 non-identical chains (alpha, beta and gamma). The 2 heterotrimers are in head to head conformation with the N-termini in a small central domain. Post-translationally, conversion of fibrinogen to fibrin is triggered by thrombin, which cleaves fibrinopeptides A and B from alpha and beta chains, and thus exposes the N-terminal polymerization sites responsible for the formation of the soft clot. The soft clot is converted into the hard clot by factor XIIIA which catalyzes the epsilon-(gamma-glutamyl)lysine cross-linking between gamma chains (stronger) and between alpha chains (weaker) of different monomers. In terms of processing, sulfation of C-terminal tyrosines increases affinity for thrombin. As to expression, detected in blood plasma (at protein level).

The protein resides in the secreted. Functionally, together with fibrinogen alpha (FGA) and fibrinogen beta (FGB), polymerizes to form an insoluble fibrin matrix. Has a major function in hemostasis as one of the primary components of blood clots. In addition, functions during the early stages of wound repair to stabilize the lesion and guide cell migration during re-epithelialization. Was originally thought to be essential for platelet aggregation, based on in vitro studies using anticoagulated blood. However, subsequent studies have shown that it is not absolutely required for thrombus formation in vivo. Enhances expression of SELP in activated platelets via an ITGB3-dependent pathway. Maternal fibrinogen is essential for successful pregnancy. Fibrin deposition is also associated with infection, where it protects against IFNG-mediated hemorrhage. May also facilitate the antibacterial immune response via both innate and T-cell mediated pathways. The chain is Fibrinogen gamma chain (FGG) from Homo sapiens (Human).